The following is a 198-amino-acid chain: RxLR effector protein CRE4 (198 aa).

A signal peptide spans 1 to 20 (MLRSFLLIVATVSLFGQCKP). The short motif at 43-52 (RFVRTNDEER) is the RxLR-dEER element.

Belongs to the RxLR effector family.

The protein localises to the secreted. It localises to the host cytoplasm. The protein resides in the host nucleus. Its subcellular location is the host nucleolus. In terms of biological role, effector that is involved in host plant infection. Contributes to virulence during the early infection stage, by inhibiting plant defense responses induced by both PAMP-triggered immunity (PTI) and effector-triggered immunity (ETI). This is RxLR effector protein CRE4 (CRE4) from Phytophthora infestans (strain T30-4) (Potato late blight agent).